Consider the following 302-residue polypeptide: Arginase (302 aa).

Mn(2+) contacts are provided by histidine 103, aspartate 126, histidine 128, and aspartate 130. Substrate is bound by residues 128 to 132 (HGDLN), 139 to 141 (SGN), and aspartate 180. Aspartate 229 and aspartate 231 together coordinate Mn(2+). Positions 243 and 274 each coordinate substrate.

Belongs to the arginase family. Requires Mn(2+) as cofactor.

The catalysed reaction is L-arginine + H2O = urea + L-ornithine. It functions in the pathway nitrogen metabolism; urea cycle; L-ornithine and urea from L-arginine: step 1/1. The protein is Arginase (arg) of Staphylococcus aureus (strain MRSA252).